The following is a 464-amino-acid chain: Flavin-containing monooxygenase FMO GS-OX-like 7 (464 aa).

Residue 18–23 (GAGAAG) participates in FAD binding. 214 to 219 (GSSVSG) provides a ligand contact to NADP(+).

Belongs to the FMO family. FAD serves as cofactor.

Catalyzes the conversion of methylthioalkyl glucosinolates of any chain length into methylsulfinylalkyl glucosinolates. The chain is Flavin-containing monooxygenase FMO GS-OX-like 7 from Arabidopsis thaliana (Mouse-ear cress).